Consider the following 316-residue polypeptide: tRNA(Ile)-lysidine synthase (316 aa).

33–38 contacts ATP; sequence SGGTDS.

It belongs to the tRNA(Ile)-lysidine synthase family.

It localises to the cytoplasm. The enzyme catalyses cytidine(34) in tRNA(Ile2) + L-lysine + ATP = lysidine(34) in tRNA(Ile2) + AMP + diphosphate + H(+). In terms of biological role, ligates lysine onto the cytidine present at position 34 of the AUA codon-specific tRNA(Ile) that contains the anticodon CAU, in an ATP-dependent manner. Cytidine is converted to lysidine, thus changing the amino acid specificity of the tRNA from methionine to isoleucine. The chain is tRNA(Ile)-lysidine synthase from Bdellovibrio bacteriovorus (strain ATCC 15356 / DSM 50701 / NCIMB 9529 / HD100).